Reading from the N-terminus, the 290-residue chain is 4-hydroxy-tetrahydrodipicolinate synthase (290 aa).

Residue T44 coordinates pyruvate. The active-site Proton donor/acceptor is Y132. K160 functions as the Schiff-base intermediate with substrate in the catalytic mechanism. Position 202 (I202) interacts with pyruvate.

This sequence belongs to the DapA family. Homotetramer; dimer of dimers.

The protein localises to the cytoplasm. It catalyses the reaction L-aspartate 4-semialdehyde + pyruvate = (2S,4S)-4-hydroxy-2,3,4,5-tetrahydrodipicolinate + H2O + H(+). It functions in the pathway amino-acid biosynthesis; L-lysine biosynthesis via DAP pathway; (S)-tetrahydrodipicolinate from L-aspartate: step 3/4. In terms of biological role, catalyzes the condensation of (S)-aspartate-beta-semialdehyde [(S)-ASA] and pyruvate to 4-hydroxy-tetrahydrodipicolinate (HTPA). This chain is 4-hydroxy-tetrahydrodipicolinate synthase, found in Geobacter metallireducens (strain ATCC 53774 / DSM 7210 / GS-15).